A 439-amino-acid chain; its full sequence is Gap junction gamma-2 protein (439 aa).

Over M1–K25 the chain is Cytoplasmic. The chain crosses the membrane as a helical span at residues V26–I46. At Y47–R78 the chain is on the extracellular side. Residues F79 to V99 form a helical membrane-spanning segment. At H100–Q216 the chain is on the cytoplasmic side. Residues Q108–C178 are disordered. Residues R112 to R125 show a composition bias toward basic residues. The segment covering D140 to A174 has biased composition (acidic residues). The chain crosses the membrane as a helical span at residues L217–F237. Residues E238–T265 are Extracellular-facing. A helical membrane pass occupies residues V266–M286. The Cytoplasmic segment spans residues A287–I439. A disordered region spans residues A364–I439. Position 371 is a phosphoserine (S371). The span at P378–R393 shows a compositional bias: low complexity.

It belongs to the connexin family. Gamma-type subfamily. A connexon is composed of a hexamer of connexins. Interacts with TJP1. As to expression, expressed in central nervous system, in sciatic nerve and sural nerve. Also detected in skeletal muscles.

It localises to the cell membrane. It is found in the cell junction. The protein resides in the gap junction. One gap junction consists of a cluster of closely packed pairs of transmembrane channels, the connexons, through which materials of low MW diffuse from one cell to a neighboring cell. May play a role in myelination in central and peripheral nervous systems. This chain is Gap junction gamma-2 protein (GJC2), found in Homo sapiens (Human).